A 593-amino-acid chain; its full sequence is NADH-quinone oxidoreductase subunit C/D (593 aa).

The tract at residues 1–184 (MTADSALYIP…DPYSLSAAKQ (184 aa)) is NADH dehydrogenase I subunit C. The tract at residues 208–593 (DYMFLNLGPN…IDFVMADVDR (386 aa)) is NADH dehydrogenase I subunit D.

The protein in the N-terminal section; belongs to the complex I 30 kDa subunit family. This sequence in the C-terminal section; belongs to the complex I 49 kDa subunit family. NDH-1 is composed of 13 different subunits. Subunits NuoB, CD, E, F, and G constitute the peripheral sector of the complex.

Its subcellular location is the cell inner membrane. The catalysed reaction is a quinone + NADH + 5 H(+)(in) = a quinol + NAD(+) + 4 H(+)(out). Functionally, NDH-1 shuttles electrons from NADH, via FMN and iron-sulfur (Fe-S) centers, to quinones in the respiratory chain. The immediate electron acceptor for the enzyme in this species is believed to be ubiquinone. Couples the redox reaction to proton translocation (for every two electrons transferred, four hydrogen ions are translocated across the cytoplasmic membrane), and thus conserves the redox energy in a proton gradient. The sequence is that of NADH-quinone oxidoreductase subunit C/D from Pseudomonas paraeruginosa (strain DSM 24068 / PA7) (Pseudomonas aeruginosa (strain PA7)).